The sequence spans 481 residues: UDP-N-acetylmuramoyl-L-alanyl-D-glutamate--L-lysine ligase (481 aa).

Ser42 serves as a coordination point for UDP-N-acetyl-alpha-D-muramoyl-L-alanyl-D-glutamate. Residue 118–124 (GTKGKTT) participates in ATP binding. UDP-N-acetyl-alpha-D-muramoyl-L-alanyl-D-glutamate contacts are provided by residues Gln158, 160-161 (TT), Ser187, and Arg195. At Lys229 the chain carries N6-carboxylysine. An L-lysine recognition motif motif is present at residues 404-407 (DDPN).

This sequence belongs to the MurCDEF family. MurE subfamily. Carboxylation is probably crucial for Mg(2+) binding and, consequently, for the gamma-phosphate positioning of ATP.

Its subcellular location is the cytoplasm. The enzyme catalyses UDP-N-acetyl-alpha-D-muramoyl-L-alanyl-D-glutamate + L-lysine + ATP = UDP-N-acetyl-alpha-D-muramoyl-L-alanyl-gamma-D-glutamyl-L-lysine + ADP + phosphate + H(+). It participates in cell wall biogenesis; peptidoglycan biosynthesis. Functionally, catalyzes the addition of L-lysine to the nucleotide precursor UDP-N-acetylmuramoyl-L-alanyl-D-glutamate (UMAG) in the biosynthesis of bacterial cell-wall peptidoglycan. The polypeptide is UDP-N-acetylmuramoyl-L-alanyl-D-glutamate--L-lysine ligase (Streptococcus pyogenes serotype M3 (strain SSI-1)).